The sequence spans 635 residues: Threonine--tRNA ligase (635 aa).

One can recognise a TGS domain in the interval Met1–Thr61. The interval Asp242–Pro533 is catalytic. Zn(2+) is bound by residues Cys333, His384, and His510.

This sequence belongs to the class-II aminoacyl-tRNA synthetase family. In terms of assembly, homodimer. It depends on Zn(2+) as a cofactor.

The protein localises to the cytoplasm. It catalyses the reaction tRNA(Thr) + L-threonine + ATP = L-threonyl-tRNA(Thr) + AMP + diphosphate + H(+). In terms of biological role, catalyzes the attachment of threonine to tRNA(Thr) in a two-step reaction: L-threonine is first activated by ATP to form Thr-AMP and then transferred to the acceptor end of tRNA(Thr). Also edits incorrectly charged L-seryl-tRNA(Thr). This Nitrosomonas eutropha (strain DSM 101675 / C91 / Nm57) protein is Threonine--tRNA ligase.